We begin with the raw amino-acid sequence, 118 residues long: Large ribosomal subunit protein bL20 (118 aa).

Belongs to the bacterial ribosomal protein bL20 family.

Its function is as follows. Binds directly to 23S ribosomal RNA and is necessary for the in vitro assembly process of the 50S ribosomal subunit. It is not involved in the protein synthesizing functions of that subunit. In Staphylococcus saprophyticus subsp. saprophyticus (strain ATCC 15305 / DSM 20229 / NCIMB 8711 / NCTC 7292 / S-41), this protein is Large ribosomal subunit protein bL20.